The primary structure comprises 317 residues: Olfactory receptor 1082 (317 aa).

Topologically, residues Met1–Phe26 are extracellular. An N-linked (GlcNAc...) asparagine glycan is attached at Asn5. The helical transmembrane segment at Leu27 to Ile51 threads the bilayer. The Cytoplasmic segment spans residues Thr52–Thr58. A helical membrane pass occupies residues Pro59–Pro80. At Lys81 to Gln101 the chain is on the extracellular side. Cys98 and Cys190 are oxidised to a cystine. Residues Met102–Tyr121 form a helical membrane-spanning segment. Topologically, residues Asp122–Arg140 are cytoplasmic. A helical membrane pass occupies residues Leu141–Ile159. Residues Gln160–His197 lie on the Extracellular side of the membrane. Residues Leu198–Phe220 form a helical membrane-spanning segment. The Cytoplasmic segment spans residues Lys221 to Lys237. A helical membrane pass occupies residues Ala238–Val261. Residues Ser262–Ala273 are Extracellular-facing. Residues Ser274–Leu293 traverse the membrane as a helical segment. Over Arg294–Gly317 the chain is Cytoplasmic.

It belongs to the G-protein coupled receptor 1 family. Olfactory epithelium.

It is found in the cell membrane. In terms of biological role, odorant receptor. This chain is Olfactory receptor 1082 (Olr1082), found in Rattus norvegicus (Rat).